We begin with the raw amino-acid sequence, 942 residues long: Chitin synthase 4 (942 aa).

The segment at 1-124 is disordered; that stretch reads MPPRYPFGGG…FDEHDGDVPL (124 aa). A compositionally biased stretch (basic and acidic residues) spans 14-26; the sequence is DEAHHQPLERRTT. Residues 27–36 are compositionally biased toward polar residues; the sequence is AEAQGNSFTH. The N-linked (GlcNAc...) asparagine glycan is linked to asparagine 604. 7 helical membrane-spanning segments follow: residues 641–661, 674–694, 709–729, 755–775, 783–803, 885–905, and 909–929; these read TIQL…FFIL, VPNL…FLLS, AMVV…YLAV, IVIS…MFLE, IVQY…YAFA, VLCW…ISSI, and TIYM…RMMG.

It belongs to the chitin synthase family. Class I subfamily.

It localises to the cell membrane. Its subcellular location is the cytoplasmic vesicle membrane. It carries out the reaction [(1-&gt;4)-N-acetyl-beta-D-glucosaminyl](n) + UDP-N-acetyl-alpha-D-glucosamine = [(1-&gt;4)-N-acetyl-beta-D-glucosaminyl](n+1) + UDP + H(+). Its function is as follows. Polymerizes chitin, a structural polymer of the cell wall and septum, by transferring the sugar moiety of UDP-GlcNAc to the non-reducing end of the growing chitin polymer. The sequence is that of Chitin synthase 4 from Mycosarcoma maydis (Corn smut fungus).